Here is a 73-residue protein sequence, read N- to C-terminus: Homeodomain-only protein (73 aa).

The segment at residues 3 to 62 (TEKSVTPTEEQLEILEYNFCKVNKHPDPTTLCLIAAETGLSEEQTLKWFKQRLAEWRKSE) is a DNA-binding region (homeobox; degenerate).

It is found in the nucleus. The protein resides in the cytoplasm. Atypical homeodomain protein which does not bind DNA and is required to modulate cardiac growth and development. May act via an interaction with SRF, leading to modulate the expression of SRF-dependent cardiac-specific genes and cardiac development. May act as a co-chaperone for HSPA1A and HSPA1B chaperone proteins and assist in chaperone-mediated protein refolding. This Gallus gallus (Chicken) protein is Homeodomain-only protein (HOPX).